A 115-amino-acid polypeptide reads, in one-letter code: NADH-ubiquinone oxidoreductase chain 3 (115 aa).

A run of 3 helical transmembrane segments spans residues 4–24, 55–75, and 84–104; these read LMILSVNIILSTCLIMIAFWL, FFLVAITFLLFDLEIALLLPL, and INMMMSTAFILVSILALGLAY.

This sequence belongs to the complex I subunit 3 family. Core subunit of respiratory chain NADH dehydrogenase (Complex I) which is composed of 45 different subunits. Interacts with TMEM186. Interacts with TMEM242.

It is found in the mitochondrion inner membrane. It carries out the reaction a ubiquinone + NADH + 5 H(+)(in) = a ubiquinol + NAD(+) + 4 H(+)(out). Functionally, core subunit of the mitochondrial membrane respiratory chain NADH dehydrogenase (Complex I) which catalyzes electron transfer from NADH through the respiratory chain, using ubiquinone as an electron acceptor. Essential for the catalytic activity of complex I. The chain is NADH-ubiquinone oxidoreductase chain 3 from Podomys floridanus (Florida mouse).